Consider the following 399-residue polypeptide: MTYNKRLFTSESVTEGHPDKIADQVSDAILDEILKDDPNARVACETTVTTGMALISGEISTTTYVDIPKVVRETIKDIGYTRAKYGYDSQTMAVLTAIDEQSPDIAQGVDKALEYRNDISEEEIEATGAGDQGLMFGYATDETDTYMPLPIFLSHQLAKRLADVRKDEILDYLRPDGKVQVTVEYGEDDKPRRIDTIVVSTQHAEDVELAQIEKDIKTHVIYPTVDKALLDDETKFYINPTGRFVIGGPQGDAGLTGRKIIVDTYGGYARHGGGCFSGKDPTKVDRSAAYAARYVAKNIVAAGLAKQCEVQLAYAIGVAEPVSISINTFDTGKVSEARLVEAVRKHFDLRPAGIIKMLDLKQPIYRQTAAYGHFGRTDVLLPWEKLDKVNVLKDAVEIQ.

H17 lines the ATP pocket. D19 provides a ligand contact to Mg(2+). E45 contacts K(+). Residues E58 and Q101 each contribute to the L-methionine site. The flexible loop stretch occupies residues Q101–K111. Residues D176 to K178, R243 to F244, D252, R258 to K259, and K279 contribute to the ATP site. An L-methionine-binding site is contributed by D252. K283 contacts L-methionine.

The protein belongs to the AdoMet synthase family. In terms of assembly, homotetramer; dimer of dimers. The cofactor is Mg(2+). Requires K(+) as cofactor.

It is found in the cytoplasm. The catalysed reaction is L-methionine + ATP + H2O = S-adenosyl-L-methionine + phosphate + diphosphate. It participates in amino-acid biosynthesis; S-adenosyl-L-methionine biosynthesis; S-adenosyl-L-methionine from L-methionine: step 1/1. Its function is as follows. Catalyzes the formation of S-adenosylmethionine (AdoMet) from methionine and ATP. The overall synthetic reaction is composed of two sequential steps, AdoMet formation and the subsequent tripolyphosphate hydrolysis which occurs prior to release of AdoMet from the enzyme. The chain is S-adenosylmethionine synthase from Staphylococcus epidermidis (strain ATCC 35984 / DSM 28319 / BCRC 17069 / CCUG 31568 / BM 3577 / RP62A).